A 324-amino-acid chain; its full sequence is MIRFDDFLAHADKNRLQRFIPDFERVLDERYYSRTHGDYEGWWNALQQLPTAQASQIQFDVDTLMIGAEGDLDPEEQESLIKGLRGLHPWRKGPFNFFGNHIDTEWRSDWKWTRVAPHLSPLKGRFVLDVGCGSGYHCWRMLGEGAQFVLGVDPSPKFLFQFHCVKKYAPTAPVYYLPLRSEDLPPNMDAFDTVFSMGVLYHRRSPFDHIDELKAALRPGGELVLETLIVPGDENTVLTPLDRYAQMRNVWFIGSSLATKRWLERCGFEDVRIVDEGVTSLDEQRQTDWMTFQSLKDFLDPEDFSRTVEGYPAPARAVLVARKP.

Residues Lys92, Trp106, Lys111, Gly131, Asp153 to Ser155, Met197, Tyr201, and Arg316 contribute to the carboxy-S-adenosyl-L-methionine site.

This sequence belongs to the class I-like SAM-binding methyltransferase superfamily. CmoB family. Homotetramer.

It carries out the reaction carboxy-S-adenosyl-L-methionine + 5-hydroxyuridine(34) in tRNA = 5-carboxymethoxyuridine(34) in tRNA + S-adenosyl-L-homocysteine + H(+). Its function is as follows. Catalyzes carboxymethyl transfer from carboxy-S-adenosyl-L-methionine (Cx-SAM) to 5-hydroxyuridine (ho5U) to form 5-carboxymethoxyuridine (cmo5U) at position 34 in tRNAs. This Hahella chejuensis (strain KCTC 2396) protein is tRNA U34 carboxymethyltransferase.